The sequence spans 133 residues: Small ribosomal subunit protein uS9 (133 aa).

A compositionally biased stretch (basic and acidic residues) spans 95–113 (GDSKQELKSRGFLTRDPRK). A disordered region spans residues 95 to 133 (GDSKQELKSRGFLTRDPRKKERKKYGHKKARKSFQFSKR). The span at 114–133 (KERKKYGHKKARKSFQFSKR) shows a compositional bias: basic residues.

Belongs to the universal ribosomal protein uS9 family.

The polypeptide is Small ribosomal subunit protein uS9 (Chlamydia felis (strain Fe/C-56) (Chlamydophila felis)).